The sequence spans 1487 residues: Collagen alpha-1(II) chain (1487 aa).

An N-terminal signal peptide occupies residues methionine 1 to glycine 25. Residues glutamine 26 to alanine 181 constitute a propeptide, N-terminal propeptide. Residues glycine 32–serine 90 enclose the VWFC domain. Residues alanine 96–aspartate 1234 are disordered. Composition is skewed to basic and acidic residues over residues glutamine 105–valine 116 and proline 133–glutamate 154. The segment covering proline 158–proline 173 has biased composition (pro residues). At lysine 190 the chain carries 5-hydroxylysine. Lysine 190 carries O-linked (Gal...) hydroxylysine glycosylation. A compositionally biased stretch (low complexity) spans glycine 192–methionine 203. Residues glycine 201–proline 1214 are triple-helical region. Over residues proline 208–alanine 217 the composition is skewed to pro residues. Residues proline 212, proline 218, proline 230, proline 233, proline 245, proline 248, proline 251, proline 260, proline 269, proline 278, proline 281, and proline 284 each carry the hydroxyproline modification. Low complexity predominate over residues proline 218 to methionine 239. The segment covering proline 241–lysine 250 has biased composition (pro residues). Over residues proline 251–glutamate 265 the composition is skewed to basic and acidic residues. A 5-hydroxylysine modification is found at lysine 287. A glycan (O-linked (Gal...) hydroxylysine) is linked at lysine 287. Proline 293 is modified (hydroxyproline). 5-hydroxylysine is present on lysine 299. An O-linked (Gal...) hydroxylysine glycan is attached at lysine 299. Position 305 is a hydroxyproline (proline 305). Lysine 308 carries the post-translational modification 5-hydroxylysine. Lysine 308 is a glycosylation site (O-linked (Gal...) hydroxylysine). The span at glutamate 310–proline 320 shows a compositional bias: low complexity. Proline 314, proline 320, proline 329, proline 350, proline 356, proline 365, proline 368, and proline 371 each carry hydroxyproline. Residues threonine 335–proline 350 show a composition bias toward low complexity. Residues glycine 360–glycine 369 show a composition bias toward gly residues. 2 stretches are compositionally biased toward low complexity: residues alanine 370–alanine 382 and proline 391–proline 431. 5-hydroxylysine is present on lysine 374. The O-linked (Gal...) hydroxylysine glycan is linked to lysine 374. Hydroxyproline is present on residues proline 395, proline 398, proline 401, proline 410, and proline 416. The residue at position 419 (lysine 419) is a 5-hydroxylysine. Proline 425, proline 431, proline 434, and proline 440 each carry hydroxyproline. Pro residues predominate over residues phenylalanine 433–proline 442. Lysine 452 is modified (5-hydroxylysine). Proline 458 carries the post-translational modification Hydroxyproline. Residues lysine 464 and lysine 470 each carry the 5-hydroxylysine modification. 6 positions are modified to hydroxyproline: proline 473, proline 482, proline 497, proline 506, proline 512, and proline 518. Lysine 527 bears the 5-hydroxylysine mark. Residue proline 530 is modified to Hydroxyproline. At lysine 542 the chain carries 5-hydroxylysine. A hydroxyproline mark is found at proline 551, proline 557, proline 566, proline 581, proline 587, proline 590, proline 599, and proline 605. Residue lysine 608 is modified to 5-hydroxylysine. An O-linked (Gal...) hydroxylysine glycan is attached at lysine 608. Proline 614 carries the post-translational modification Hydroxyproline. Lysine 620 bears the 5-hydroxylysine mark. O-linked (Gal...) hydroxylysine glycosylation is present at lysine 620. Low complexity predominate over residues leucine 622–leucine 631. Hydroxyproline is present on residues proline 623, proline 626, proline 632, proline 644, proline 659, and proline 668. Low complexity predominate over residues glutamine 656–leucine 667. Proline 670 is modified (3-hydroxyproline). Hydroxyproline occurs at positions 671 and 674. Residues leucine 721–proline 736 show a composition bias toward low complexity. Residues lysine 764–proline 775 are compositionally biased toward basic and acidic residues. Low complexity-rich tracts occupy residues alanine 833–lysine 848 and proline 877–asparagine 913. The residue at position 907 (proline 907) is a 3-hydroxyproline. 3 positions are modified to 4-hydroxyproline: proline 908, proline 914, and proline 920. Over residues alanine 1069–alanine 1079 the composition is skewed to pro residues. Residues alanine 1091–proline 1109 are compositionally biased toward low complexity. The span at arginine 1115–leucine 1129 shows a compositional bias: basic and acidic residues. Lysine 1130 is modified (5-hydroxylysine). An O-linked (Gal...) hydroxylysine glycan is attached at lysine 1130. The residue at position 1144 (proline 1144) is a 3-hydroxyproline. Low complexity predominate over residues serine 1148–alanine 1157. Proline 1181 is subject to 4-hydroxyproline. Proline 1186 bears the 3-hydroxyproline mark. The residue at position 1187 (proline 1187) is a 4-hydroxyproline. Positions alanine 1199–proline 1216 are enriched in pro residues. Proline 1201 bears the 3-hydroxyproline mark. A 4-hydroxyproline mark is found at proline 1202 and proline 1205. 3-hydroxyproline is present on proline 1207. Residues proline 1208 and proline 1211 each carry the 4-hydroxyproline modification. The residue at position 1213 (proline 1213) is a 3-hydroxyproline. Proline 1214 carries the 4-hydroxyproline modification. The segment at glycine 1215–alanine 1241 is nonhelical region (C-terminal). Positions alanine 1253–leucine 1487 constitute a Fibrillar collagen NC1 domain. Disulfide bonds link cysteine 1283/cysteine 1315, cysteine 1323/cysteine 1485, and cysteine 1393/cysteine 1438. Residues aspartate 1301, asparagine 1303, glutamine 1304, cysteine 1306, and aspartate 1309 each coordinate Ca(2+). N-linked (GlcNAc...) asparagine glycosylation is present at asparagine 1388.

It belongs to the fibrillar collagen family. In terms of assembly, homotrimers of alpha 1(II) chains. Probably 3-hydroxylated on prolines by LEPREL1. Proline residues at the third position of the tripeptide repeating unit (G-X-P) are hydroxylated in some or all of the chains. Proline residues at the second position of the tripeptide repeating unit (G-P-X) are hydroxylated in some of the chains. Post-translationally, O-linked glycans consist of Glc-Gal disaccharides bound to the oxygen atom of post-translationally added hydroxyl groups. In terms of processing, contains mostly 4-hydroxyproline. Prolines at the third position of the tripeptide repeating unit (G-X-P) are 4-hydroxylated in some or all of the chains. Contains 3-hydroxyproline at a few sites. This modification occurs on the first proline residue in the sequence motif Gly-Pro-Hyp, where Hyp is 4-hydroxyproline. Post-translationally, lysine residues at the third position of the tripeptide repeating unit (G-X-Y) are 5-hydroxylated in some or all of the chains. In terms of processing, O-glycosylated on hydroxylated lysine residues. The O-linked glycan consists of a Glc-Gal disaccharide.

The protein localises to the secreted. It is found in the extracellular space. It localises to the extracellular matrix. Its function is as follows. Type II collagen is specific for cartilaginous tissues. It is essential for the normal embryonic development of the skeleton, for linear growth and for the ability of cartilage to resist compressive forces. The sequence is that of Collagen alpha-1(II) chain from Bos taurus (Bovine).